Here is a 234-residue protein sequence, read N- to C-terminus: HTH-type transcriptional regulator SmoD (234 aa).

Residues 8-76 (LPMYMQIAEM…QGSGNYIRAV (69 aa)) enclose the HTH gntR-type domain. Positions 36-55 (ERDMAADLGIAVGTLRKSLA) form a DNA-binding region, H-T-H motif.

Its subcellular location is the cytoplasm. Functionally, probably regulates expression of genes involved in the sulfoquinovose monooxygenase (sulfo-SMO) pathway (smoABCDEFGHI). In Agrobacterium fabrum (strain C58 / ATCC 33970) (Agrobacterium tumefaciens (strain C58)), this protein is HTH-type transcriptional regulator SmoD.